The primary structure comprises 430 residues: MLDPNLLRNEPDAVAEKLARRGFKLDVDKLRALEERRKVLQVNTENLQAERNSRSKSIGQAKARGEDIEPLRLEVNKLGEELDAAKAELESLQAEIRDIALTIPNLPADDVPVGKDENDNVEVSRWGTPREFDFDVRDHVTLGEMHAGLDFAAAVKLTGSRFVVMKGQIARMHRALSQFMLDLHTEQHGYSENYVPYLVNHDTLYGTGQLPKFAGDLFHTRPLEEEADSSNYALIPTAEVPLTNLVRDEIIDEDALPIKMTAHTPCFRSEAGSYGRDTRGLIRMHQFDKVEMVQIVRPEESMDALEEMTGHAEKVLQLLGLPYRKIVLCTGDMGFGACKTYDLEVWIPAQNTYREISSCSNVWDFQARRMQARCRSKSDKKTRLVHTLNGSGLAVGRTLVAVMENYQQADGRIEVPEVLRPYMNGLEYIG.

Residue 237 to 239 coordinates L-serine; sequence TAE. 268 to 270 serves as a coordination point for ATP; that stretch reads RSE. Residue Glu-291 participates in L-serine binding. Position 355-358 (355-358) interacts with ATP; that stretch reads EISS. Residue Ser-391 coordinates L-serine.

This sequence belongs to the class-II aminoacyl-tRNA synthetase family. Type-1 seryl-tRNA synthetase subfamily. As to quaternary structure, homodimer. The tRNA molecule binds across the dimer.

It localises to the cytoplasm. It carries out the reaction tRNA(Ser) + L-serine + ATP = L-seryl-tRNA(Ser) + AMP + diphosphate + H(+). The catalysed reaction is tRNA(Sec) + L-serine + ATP = L-seryl-tRNA(Sec) + AMP + diphosphate + H(+). It participates in aminoacyl-tRNA biosynthesis; selenocysteinyl-tRNA(Sec) biosynthesis; L-seryl-tRNA(Sec) from L-serine and tRNA(Sec): step 1/1. Its function is as follows. Catalyzes the attachment of serine to tRNA(Ser). Is also able to aminoacylate tRNA(Sec) with serine, to form the misacylated tRNA L-seryl-tRNA(Sec), which will be further converted into selenocysteinyl-tRNA(Sec). The chain is Serine--tRNA ligase from Citrobacter koseri (strain ATCC BAA-895 / CDC 4225-83 / SGSC4696).